Here is a 361-residue protein sequence, read N- to C-terminus: Eukaryotic translation initiation factor 3 subunit F (361 aa).

The interval 1 to 86 is disordered; the sequence is MATPAVPVSA…PAPALPGPAL (86 aa). Residue alanine 2 is modified to N-acetylalanine. 2 stretches are compositionally biased toward pro residues: residues 9–20 and 30–40; these read SAPPATPAPVPA and VPAPTPAPAAA. Over residues 41-78 the composition is skewed to low complexity; sequence PVPAAAPASSSDPAAAAATTAAPGQTPASAQAPAQTPA. Serine 50 is modified (phosphoserine; by CDK11; in vitro). The 131-residue stretch at 96 to 226 folds into the MPN domain; the sequence is VRLHPVILAS…IKAYVSTLMG (131 aa). N6-acetyllysine is present on lysine 242. Serine 262 is subject to Phosphoserine.

This sequence belongs to the eIF-3 subunit F family. Component of the eukaryotic translation initiation factor 3 (eIF-3) complex, which is composed of 13 subunits: EIF3A, EIF3B, EIF3C, EIF3D, EIF3E, EIF3F, EIF3G, EIF3H, EIF3I, EIF3J, EIF3K, EIF3L and EIF3M. The eIF-3 complex appears to include 3 stable modules: module A is composed of EIF3A, EIF3B, EIF3G and EIF3I; module B is composed of EIF3F, EIF3H, and EIF3M; and module C is composed of EIF3C, EIF3D, EIF3E, EIF3K and EIF3L. EIF3C of module C binds EIF3B of module A and EIF3H of module B, thereby linking the three modules. EIF3J is a labile subunit that binds to the eIF-3 complex via EIF3B. The eIF-3 complex interacts with RPS6KB1 under conditions of nutrient depletion. Mitogenic stimulation leads to binding and activation of a complex composed of MTOR and RPTOR, leading to phosphorylation and release of RPS6KB1 and binding of EIF4B to eIF-3. Interacts with RNF139; the interaction leads to protein translation inhibitions in a ubiquitination-dependent manner. Interacts with DTX1, the interaction is required for deubiquitinating activity towards NOTCH1. In terms of processing, phosphorylation is enhanced upon serum stimulation. Phosphorylated during apoptosis by caspase-processed CDK11.

It is found in the cytoplasm. It carries out the reaction Thiol-dependent hydrolysis of ester, thioester, amide, peptide and isopeptide bonds formed by the C-terminal Gly of ubiquitin (a 76-residue protein attached to proteins as an intracellular targeting signal).. In terms of biological role, component of the eukaryotic translation initiation factor 3 (eIF-3) complex, which is required for several steps in the initiation of protein synthesis. The eIF-3 complex associates with the 40S ribosome and facilitates the recruitment of eIF-1, eIF-1A, eIF-2:GTP:methionyl-tRNAi and eIF-5 to form the 43S pre-initiation complex (43S PIC). The eIF-3 complex stimulates mRNA recruitment to the 43S PIC and scanning of the mRNA for AUG recognition. The eIF-3 complex is also required for disassembly and recycling of post-termination ribosomal complexes and subsequently prevents premature joining of the 40S and 60S ribosomal subunits prior to initiation. The eIF-3 complex specifically targets and initiates translation of a subset of mRNAs involved in cell proliferation, including cell cycling, differentiation and apoptosis, and uses different modes of RNA stem-loop binding to exert either translational activation or repression. Deubiquitinates activated NOTCH1, promoting its nuclear import, thereby acting as a positive regulator of Notch signaling. The chain is Eukaryotic translation initiation factor 3 subunit F from Pan troglodytes (Chimpanzee).